The sequence spans 335 residues: Biotin synthase (335 aa).

The 229-residue stretch at Tyr-46–Arg-274 folds into the Radical SAM core domain. Residues Cys-61, Cys-65, and Cys-68 each coordinate [4Fe-4S] cluster. 4 residues coordinate [2Fe-2S] cluster: Cys-105, Cys-137, Cys-197, and Arg-269.

The protein belongs to the radical SAM superfamily. Biotin synthase family. In terms of assembly, homodimer. [4Fe-4S] cluster is required as a cofactor. [2Fe-2S] cluster serves as cofactor.

The catalysed reaction is (4R,5S)-dethiobiotin + (sulfur carrier)-SH + 2 reduced [2Fe-2S]-[ferredoxin] + 2 S-adenosyl-L-methionine = (sulfur carrier)-H + biotin + 2 5'-deoxyadenosine + 2 L-methionine + 2 oxidized [2Fe-2S]-[ferredoxin]. It participates in cofactor biosynthesis; biotin biosynthesis; biotin from 7,8-diaminononanoate: step 2/2. In terms of biological role, catalyzes the conversion of dethiobiotin (DTB) to biotin by the insertion of a sulfur atom into dethiobiotin via a radical-based mechanism. This Prochlorococcus marinus (strain MIT 9312) protein is Biotin synthase.